Here is a 379-residue protein sequence, read N- to C-terminus: D-threonine aldolase (379 aa).

Lys59 is modified (N6-(pyridoxal phosphate)lysine).

The protein belongs to the DSD1 family. Pyridoxal 5'-phosphate is required as a cofactor. It depends on Mn(2+) as a cofactor. The cofactor is Co(2+). Ni(2+) serves as cofactor. Requires Mg(2+) as cofactor.

The enzyme catalyses D-threonine = acetaldehyde + glycine. The catalysed reaction is D-allo-threonine = acetaldehyde + glycine. Inhibited by the carbonyl reagents hydroxylamine, phenylhydrazine and semicarbazide. Inhibited by the chelating agent EDTA. Inhibited by the sulfhydryl reagent p-chloromercuribenzoic acid, and by sodium cyanide. Inhibited by iodoacetate, Ag(2)SO(4), HgCl(2) and CdCl(2). Competitively inhibited by beta-hydroxyaspartate and O-phospho-DL-threonine. In terms of biological role, catalyzes the reversible cleavage of D-threonine or D-allothreonine into glycine and acetaldehyde. Can also cleave D-beta-phenylserine, D-beta-hydroxy-alpha-aminovaleric acid, D-beta-3,4-dihydroxyphenylserine and D-beta-3,4-methylenedioxyphenylserine into glycine and the corresponding aldehyde compounds. Inactive towards D-serine, beta-hydroxyaspartate and O-phospho-DL-threonine. The sequence is that of D-threonine aldolase from Arthrobacter sp.